The following is a 220-amino-acid chain: 7-cyano-7-deazaguanine synthase (220 aa).

7–17 contributes to the ATP binding site; that stretch reads ISGGMDSSTAA. Zn(2+)-binding residues include C187, C195, C198, and C201.

Belongs to the QueC family. It depends on Zn(2+) as a cofactor.

It catalyses the reaction 7-carboxy-7-deazaguanine + NH4(+) + ATP = 7-cyano-7-deazaguanine + ADP + phosphate + H2O + H(+). It participates in purine metabolism; 7-cyano-7-deazaguanine biosynthesis. Its function is as follows. Catalyzes the ATP-dependent conversion of 7-carboxy-7-deazaguanine (CDG) to 7-cyano-7-deazaguanine (preQ(0)). The protein is 7-cyano-7-deazaguanine synthase of Campylobacter hominis (strain ATCC BAA-381 / DSM 21671 / CCUG 45161 / LMG 19568 / NCTC 13146 / CH001A).